The chain runs to 254 residues: 5-oxoprolinase subunit A 1 (254 aa).

The protein belongs to the LamB/PxpA family. Forms a complex composed of PxpA, PxpB and PxpC.

The enzyme catalyses 5-oxo-L-proline + ATP + 2 H2O = L-glutamate + ADP + phosphate + H(+). Functionally, catalyzes the cleavage of 5-oxoproline to form L-glutamate coupled to the hydrolysis of ATP to ADP and inorganic phosphate. This is 5-oxoprolinase subunit A 1 from Burkholderia pseudomallei (strain K96243).